The following is a 362-amino-acid chain: Methionine import ATP-binding protein MetN (362 aa).

Positions 2–241 constitute an ABC transporter domain; that stretch reads IHIKNLSKTY…PQHDVTRAMV (240 aa). 38-45 contributes to the ATP binding site; the sequence is GPSGAGKS.

It belongs to the ABC transporter superfamily. Methionine importer (TC 3.A.1.24) family. The complex is composed of two ATP-binding proteins (MetN), two transmembrane proteins (MetI) and a solute-binding protein (MetQ).

The protein resides in the cell inner membrane. The catalysed reaction is L-methionine(out) + ATP + H2O = L-methionine(in) + ADP + phosphate + H(+). The enzyme catalyses D-methionine(out) + ATP + H2O = D-methionine(in) + ADP + phosphate + H(+). Part of the ABC transporter complex MetNIQ involved in methionine import. Responsible for energy coupling to the transport system. This Bordetella avium (strain 197N) protein is Methionine import ATP-binding protein MetN.